A 938-amino-acid chain; its full sequence is Translation initiation factor IF-2 (938 aa).

The tract at residues 55–322 (KAEASAAPAA…RKSKRARRQE (268 aa)) is disordered. Low complexity-rich tracts occupy residues 57 to 68 (EASAAPAAPAEK) and 77 to 117 (KKAA…AAAP). Residues 118-136 (KPGPKPAPVAEQPAPPAEP) are compositionally biased toward pro residues. Low complexity-rich tracts occupy residues 141–153 (APEA…APAA), 180–198 (GMGR…AGDN), and 224–233 (MMPKSPSAFG). Gly residues predominate over residues 247–293 (PGRGGAPGRGGAPGRGGVGTGAPGRGGAPGGGFGPSGGGRPGGGRPG). Basic residues predominate over residues 310-319 (RRGRKSKRAR). A tr-type G domain is found at 431 to 603 (ARPPVVTVMG…VVLTADASLD (173 aa)). Residues 440–447 (GHVDHGKT) are G1. A GTP-binding site is contributed by 440–447 (GHVDHGKT). The tract at residues 465 to 469 (GITQH) is G2. The interval 490–493 (DTPG) is G3. Residues 490–494 (DTPGH) and 544–547 (NKID) contribute to the GTP site. The interval 544 to 547 (NKID) is G4. The interval 580–582 (SAK) is G5.

It belongs to the TRAFAC class translation factor GTPase superfamily. Classic translation factor GTPase family. IF-2 subfamily.

Its subcellular location is the cytoplasm. In terms of biological role, one of the essential components for the initiation of protein synthesis. Protects formylmethionyl-tRNA from spontaneous hydrolysis and promotes its binding to the 30S ribosomal subunits. Also involved in the hydrolysis of GTP during the formation of the 70S ribosomal complex. This is Translation initiation factor IF-2 from Nocardioides sp. (strain ATCC BAA-499 / JS614).